Here is a 230-residue protein sequence, read N- to C-terminus: Demethylmenaquinone methyltransferase (230 aa).

S-adenosyl-L-methionine contacts are provided by residues threonine 62, aspartate 80, 100-101 (DG), and serine 117.

This sequence belongs to the class I-like SAM-binding methyltransferase superfamily. MenG/UbiE family.

The catalysed reaction is a 2-demethylmenaquinol + S-adenosyl-L-methionine = a menaquinol + S-adenosyl-L-homocysteine + H(+). It functions in the pathway quinol/quinone metabolism; menaquinone biosynthesis; menaquinol from 1,4-dihydroxy-2-naphthoate: step 2/2. Methyltransferase required for the conversion of demethylmenaquinol (DMKH2) to menaquinol (MKH2). This Corynebacterium glutamicum (strain ATCC 13032 / DSM 20300 / JCM 1318 / BCRC 11384 / CCUG 27702 / LMG 3730 / NBRC 12168 / NCIMB 10025 / NRRL B-2784 / 534) protein is Demethylmenaquinone methyltransferase.